The following is a 280-amino-acid chain: Succinate dehydrogenase [ubiquinone] iron-sulfur subunit, mitochondrial (280 aa).

The transit peptide at 1 to 28 (MAAVVALSLRRRLPATTLGGACLQASRG) directs the protein to the mitochondrion. In terms of domain architecture, 2Fe-2S ferredoxin-type spans 40–133 (KKFAIYRWDP…VSKIYPLPHM (94 aa)). N6-acetyllysine occurs at positions 51 and 55. The [2Fe-2S] cluster site is built by Cys-93, Cys-98, Cys-101, and Cys-113. Residues 146 to 218 (FYAQYKSIEP…PAVLMQAYRW (73 aa)) form an interaction with SDHAF1 region. One can recognise a 4Fe-4S ferredoxin-type domain in the interval 176–206 (EREKLDGLYECILCACCSTSCPSYWWNGDKY). 3 residues coordinate [4Fe-4S] cluster: Cys-186, Cys-189, and Cys-192. Cys-196 contacts [3Fe-4S] cluster. Residue Trp-201 participates in a ubiquinone binding. Residues Cys-243 and Cys-249 each contribute to the [3Fe-4S] cluster site. Cys-253 is a [4Fe-4S] cluster binding site.

This sequence belongs to the succinate dehydrogenase/fumarate reductase iron-sulfur protein family. In terms of assembly, component of complex II composed of four subunits: the flavoprotein (FP) SDHA, iron-sulfur protein (IP) SDHB, and a cytochrome b560 composed of SDHC and SDHD. Interacts with SDHAF1; the interaction is required for iron-sulfur cluster incorporation into SDHB. (Microbial infection) Interacts with JC virus small t antigen. Requires [2Fe-2S] cluster as cofactor. [3Fe-4S] cluster is required as a cofactor. The cofactor is [4Fe-4S] cluster.

It localises to the mitochondrion inner membrane. The catalysed reaction is a quinone + succinate = fumarate + a quinol. It carries out the reaction (R)-malate + a quinone = enol-oxaloacetate + a quinol. The enzyme catalyses (S)-malate + a quinone = enol-oxaloacetate + a quinol. It participates in carbohydrate metabolism; tricarboxylic acid cycle; fumarate from succinate (eukaryal route): step 1/1. Its activity is regulated as follows. Enol-oxaloacetate inhibits the succinate dehydrogenase activity. Its function is as follows. Iron-sulfur protein (IP) subunit of the succinate dehydrogenase complex (mitochondrial respiratory chain complex II), responsible for transferring electrons from succinate to ubiquinone (coenzyme Q). SDH also oxidizes malate to the non-canonical enol form of oxaloacetate, enol-oxaloacetate. Enol-oxaloacetate, which is a potent inhibitor of the succinate dehydrogenase activity, is further isomerized into keto-oxaloacetate. The protein is Succinate dehydrogenase [ubiquinone] iron-sulfur subunit, mitochondrial (SDHB) of Homo sapiens (Human).